Reading from the N-terminus, the 147-residue chain is MENLEKKIELLKKIREFLILNLEIKKLMQELNVDSDIYEAYEKVTKIVREPNIKLYRQYYDAIKEMFYEEYGKKRKDISWYPKIDYNRCKNCEKCISFCPRGVYDAENGKVVVKYPYSCIVNCNACSIMCCENNAIIFPDEKIPRRN.

4Fe-4S ferredoxin-type domains follow at residues 80-109 (WYPK…AENG) and 110-141 (KVVV…FPDE). Residues C89, C92, C95, C99, C119, C123, C126, and C130 each coordinate [4Fe-4S] cluster.

It depends on [4Fe-4S] cluster as a cofactor.

This is an uncharacterized protein from Methanocaldococcus jannaschii (strain ATCC 43067 / DSM 2661 / JAL-1 / JCM 10045 / NBRC 100440) (Methanococcus jannaschii).